The sequence spans 136 residues: Large ribosomal subunit protein uL16c (136 aa).

It belongs to the universal ribosomal protein uL16 family. In terms of assembly, part of the 50S ribosomal subunit.

The protein resides in the plastid. It localises to the chloroplast. The protein is Large ribosomal subunit protein uL16c of Chlamydomonas reinhardtii (Chlamydomonas smithii).